The following is a 303-amino-acid chain: tRNA dimethylallyltransferase (303 aa).

ATP is bound at residue 10 to 17 (GPTASGKS). A substrate-binding site is contributed by 12–17 (TASGKS). Positions 35 to 38 (DSMQ) are interaction with substrate tRNA.

It belongs to the IPP transferase family. Monomer. Mg(2+) is required as a cofactor.

The catalysed reaction is adenosine(37) in tRNA + dimethylallyl diphosphate = N(6)-dimethylallyladenosine(37) in tRNA + diphosphate. In terms of biological role, catalyzes the transfer of a dimethylallyl group onto the adenine at position 37 in tRNAs that read codons beginning with uridine, leading to the formation of N6-(dimethylallyl)adenosine (i(6)A). This Methylobacterium nodulans (strain LMG 21967 / CNCM I-2342 / ORS 2060) protein is tRNA dimethylallyltransferase.